The following is a 483-amino-acid chain: Ero1-like protein (483 aa).

Residues 1 to 29 form the signal peptide; sequence MTTRTVQRNLWASAAVVLVLLLLWTDTTG. 6 cysteine pairs are disulfide-bonded: Cys-44–Cys-57, Cys-46–Cys-55, Cys-94–Cys-402, Cys-103–Cys-108, Cys-227–Cys-251, and Cys-405–Cys-408. FAD contacts are provided by Arg-206, Thr-208, and Trp-219. N-linked (GlcNAc...) asparagine glycosylation is present at Asn-232. The FAD site is built by Ser-262, His-265, and Arg-301. A glycan (N-linked (GlcNAc...) asparagine) is linked at Asn-395.

It belongs to the EROs family. In terms of assembly, may function both as a monomer and a homodimer. FAD is required as a cofactor.

The protein localises to the endoplasmic reticulum membrane. Its function is as follows. Oxidoreductase involved in disulfide bond formation in the endoplasmic reticulum. Efficiently reoxidizes pdi-1, the enzyme catalyzing protein disulfide formation, in order to allow pdi-1 to sustain additional rounds of disulfide formation. Following pdi reoxidation, passes its electrons to molecular oxygen via FAD, leading to the production of reactive oxygen species (ROS) in the cell. This is Ero1-like protein (Ero1L) from Drosophila melanogaster (Fruit fly).